The sequence spans 393 residues: uncharacterized protein (393 aa).

This is an uncharacterized protein from Treponema pallidum (strain Nichols).